Consider the following 139-residue polypeptide: Translation initiation factor 2 subunit beta (139 aa).

It belongs to the eIF-2-beta/eIF-5 family. In terms of assembly, heterotrimer composed of an alpha, a beta and a gamma chain.

Functionally, eIF-2 functions in the early steps of protein synthesis by forming a ternary complex with GTP and initiator tRNA. This Methanococcus aeolicus (strain ATCC BAA-1280 / DSM 17508 / OCM 812 / Nankai-3) protein is Translation initiation factor 2 subunit beta.